We begin with the raw amino-acid sequence, 475 residues long: MKIIQASVECAPFIKAGGLGDVVYSLSKALSIHHDVEILLPFYPLLFPAFSSQVLDEHVFAYNFLGRQNATATSYRYEGMTLTVITLDSQLELFSTSTIYTEDDTLRFSAFSAAAAAYIQKLDKVDVVHMHDWHVGLLAGLLKEPHLPSYPKRIFTIHNFSYRGYCSTQLLGASEISDFGLSNYQLFRDPSTSVLLKGALYCSDYITTVSPSYAQDILNDYSDYEIHDAIMSRRHVFCGILNGIDENIWNPETDPALAVRYGTHLLKSPDVLFTKKEENKIALYEKLGLSLEYSPLMCVISRIVEQKGPEFMKAAILHAMENSYALVIAGTCYDQETQRQFTNLQESLTTSPNIRIILDYNDPLVRLIYGAADMICIPSHFEPCGLTQLIGMRYGTVPLVRSTGGLADTVAAGVNGFTFSHTDNFNDFFHMLSQAVSTYRHEPDVWFQLVEEGMLRPSGLTTMAAHYLGVYNSLL.

Residue lysine 15 participates in ADP-alpha-D-glucose binding.

The protein belongs to the glycosyltransferase 1 family. Bacterial/plant glycogen synthase subfamily.

It carries out the reaction [(1-&gt;4)-alpha-D-glucosyl](n) + ADP-alpha-D-glucose = [(1-&gt;4)-alpha-D-glucosyl](n+1) + ADP + H(+). Its pathway is glycan biosynthesis; glycogen biosynthesis. Functionally, synthesizes alpha-1,4-glucan chains using ADP-glucose. The sequence is that of Glycogen synthase from Chlamydia abortus (strain DSM 27085 / S26/3) (Chlamydophila abortus).